A 312-amino-acid polypeptide reads, in one-letter code: Telomere-binding protein OPG077 (312 aa).

The protein belongs to the orthopoxvirus OPG077 family.

It is found in the virion. Its function is as follows. DNA-binding protein which binds to the hairpin form of the viral telomeric sequence. Required for the production of mature virions (MV). In Rabbitpox virus (strain Utrecht) (RPV), this protein is Telomere-binding protein OPG077 (OPG077).